Consider the following 1337-residue polypeptide: Partitioning defective 3 homolog (1337 aa).

A Phosphoserine modification is found at serine 25. Disordered regions lie at residues 81 to 109 and 143 to 263; these read EQDP…SELG and SSDP…LENM. Threonine 91 carries the post-translational modification Phosphothreonine. Over residues 91-100 the composition is skewed to low complexity; that stretch reads TSASSTGTQS. Polar residues-rich tracts occupy residues 150-163 and 171-188; these read GLST…FSSE and TRWS…TGSP. 2 positions are modified to phosphoserine: serine 156 and serine 174. The span at 190-203 shows a compositional bias: basic and acidic residues; that stretch reads TCDRKKDENYRSLP. Residues 207–224 show a composition bias toward polar residues; it reads SSWSNQFQRDNARSSLSA. The region spanning 271–359 is the PDZ 1 domain; that stretch reads MVKLVQVPND…ARVIWFHVVP (89 aa). Serine 383 is subject to Phosphoserine. Positions 397–441 are disordered; sequence NAPQALPRAPRLSQPPEQLDAHPRLPHSAHASTKPPTAPALAPPN. PDZ domains are found at residues 461 to 546 and 590 to 677; these read NIQL…LVFR and EVPL…GMIQ. Phosphotyrosine is present on tyrosine 489. Residues serine 692, serine 695, serine 715, serine 728, serine 809, and serine 827 each carry the phosphoserine modification. An interaction with PRKCI and PRKCZ region spans residues 712–936; that stretch reads RRISHSLYSG…AAIDKSYDKP (225 aa). N6-acetyllysine is present on lysine 834. Serine 837 carries the post-translational modification Phosphoserine. Lysine 851 is modified (N6-acetyllysine). Serine 852 and serine 873 each carry phosphoserine. Disordered stretches follow at residues 866-888, 932-1015, 1028-1055, 1110-1271, and 1284-1337; these read VDDQ…KKSS, SYDK…AKKG, KHRK…DRVR, LNAR…LGGH, and LLRQ…PFYS. Lysine 885 bears the N6-acetyllysine mark. Residues 935-1337 are interaction with FRMD4A; the sequence is KPMVDDDDEG…TPEKGRPFYS (403 aa). Residues 939–953 show a composition bias toward acidic residues; it reads DDDDEGMETLEEDTE. Serine 962 is subject to Phosphoserine; by AURKA. Phosphoserine is present on residues serine 971 and serine 973. Composition is skewed to basic and acidic residues over residues 981–1009 and 1030–1043; these read DPEK…EKDK and RKDD…RIKI. The residue at position 1046 (serine 1046) is a Phosphoserine. The stretch at 1050–1082 forms a coiled coil; that stretch reads EEDRVRMKEEQERIQAKTREFRERQARERDYAE. Over residues 1138 to 1147 the composition is skewed to polar residues; the sequence is PGDSNRSTPS. Basic and acidic residues predominate over residues 1148 to 1175; the sequence is NHDRIQRLRQEFQQAKQDEDVEDRRRTY. Coiled-coil stretches lie at residues 1149 to 1172, 1199 to 1222, and 1278 to 1299; these read HDRI…EDRR, VQVQ…YSSL, and MLET…LKKQ. Low complexity predominate over residues 1180 to 1203; sequence SWSSSRPASQSGRHSVSVEVQVQR. The span at 1219–1240 shows a compositional bias: polar residues; the sequence is YSSLPRQSRKNASSVSQDSWEQ. Residues 1284–1296 show a composition bias toward basic and acidic residues; that stretch reads LLRQEQRRKEQQL. Residues 1318-1327 show a composition bias toward polar residues; that stretch reads SQVARLNRLQ. A compositionally biased stretch (basic and acidic residues) spans 1328 to 1337; that stretch reads TPEKGRPFYS. An N6-acetyllysine modification is found at lysine 1331.

It belongs to the PAR3 family. As to quaternary structure, component of a complex whose core is composed of ARHGAP17, AMOT, PALS1, PATJ and PARD3/PAR3. Interacts (via PDZ 1 domain) with PARD6A, PARD6B and F11R/JAM1. Interacts with AURKA, AURKB and SIRT2. Interacts with PRKCI. Interacts with PRKCZ. Part of a complex with PARD6A or PARD6B, PRKCI or PRKCZ and CDC42 or RAC1. Interacts with LIMK2 and CDH5. Component of the Par polarity complex, composed of at least phosphorylated PRKCZ, PARD3 and TIAM1. Directly interacts with TIAM1 and TIAM2. Interacts with ECT2 and FBF1. Interacts (via PDZ 3 domain) with PTEN (via C-terminus). Interacts (via coiled-coil domain) with FRMD4A. Found in a complex with PARD3, CYTH1 and FRMD4A. Interacts with SAPCD2. Interacts with PRKCA. In terms of assembly, interacts with PRKCZ. In terms of processing, acetylated. Deacetylated by SIRT2, thereby inhibiting Schwann cell peripheral myelination. Phosphorylation at Ser-827 by PRKCZ and PRKCI occurs at the most apical tip of epithelial cell-cell contacts during the initial phase of tight junction formation and may promote dissociation of the complex with PARD6. EGF-induced Tyr-1127 phosphorylation mediates dissociation from LIMK2. Phosphorylation by AURKA at Ser-962 is required for the normal establishment of neuronal polarity. As to expression, isoform 1 is predominantly expressed in lung, glandular stomach, prostate, ovary and uterus. Isoform 1 is also expressed in brain, with a high expression in the cortex, hippocampus and in the striatum. Isoform 2 is predominantly expressed in intestinal epithelial cells, kidney and prostate.

The protein resides in the cytoplasm. Its subcellular location is the endomembrane system. The protein localises to the cell junction. It is found in the tight junction. It localises to the adherens junction. The protein resides in the cell cortex. Its subcellular location is the cytoskeleton. The protein localises to the cell membrane. Adapter protein involved in asymmetrical cell division and cell polarization processes. Seems to play a central role in the formation of epithelial tight junctions. Association with PARD6B may prevent the interaction of PARD3 with F11R/JAM1, thereby preventing tight junction assembly. The PARD6-PARD3 complex links GTP-bound Rho small GTPases to atypical protein kinase C proteins. Required for establishment of neuronal polarity and normal axon formation in cultured hippocampal neurons. Involved in Schwann cell peripheral myelination. Targets the phosphatase PTEN to cell junctions. The chain is Partitioning defective 3 homolog (Pard3) from Rattus norvegicus (Rat).